Here is a 418-residue protein sequence, read N- to C-terminus: MAHTLAQKILQKHTDQQVGEAGQIVRCRVSMALANDITAPLAIKSFRAMGAGKVFDKDRVALVMDHFTPQKDIDSAIQVKNTREFAAQMGITHYYEGGEAGVEHALLPELGLVGPGDIVVGADSHTCTYGGLGAFATGLGSTDVAGAMALGETWFKVPPSIRVSYRGTMPAHVGAKDLVLQLIGHIGVDGALYKALEFDGPVVDAMSVEGRMTIANMAIEAGGKCGLFPSDDLTLAYTAARGRNDEKLSADQDAVYERSLSFDVSDLAPQIACPHLPENVRPVTEVQGVQIHQAVIGSCTNGRISDLREAAAVLRGRKVHKSVRCIVLPATPGIWKQALREGLIETFMDAGCIVGPATCGPCLGGHMGILADGERAIATTNRNFRGRMGSLESEVYLSNPSVAAASAVAGEIADPRGL.

The [4Fe-4S] cluster site is built by cysteine 299, cysteine 359, and cysteine 362.

The protein belongs to the aconitase/IPM isomerase family. LeuC type 2 subfamily. In terms of assembly, heterodimer of LeuC and LeuD. [4Fe-4S] cluster is required as a cofactor.

The enzyme catalyses (2R,3S)-3-isopropylmalate = (2S)-2-isopropylmalate. It functions in the pathway amino-acid biosynthesis; L-leucine biosynthesis; L-leucine from 3-methyl-2-oxobutanoate: step 2/4. In terms of biological role, catalyzes the isomerization between 2-isopropylmalate and 3-isopropylmalate, via the formation of 2-isopropylmaleate. This is 3-isopropylmalate dehydratase large subunit from Oleidesulfovibrio alaskensis (strain ATCC BAA-1058 / DSM 17464 / G20) (Desulfovibrio alaskensis).